The following is a 915-amino-acid chain: Translation initiation factor IF-2 (915 aa).

Residues 83-94 (QSRRAVEKEQIL) show a composition bias toward basic and acidic residues. Disordered regions lie at residues 83 to 177 (QSRR…PEPP), 216 to 280 (EADR…KPAV), and 293 to 328 (ISGM…LLRE). Composition is skewed to low complexity over residues 111–129 (VRAA…EAPS) and 137–164 (APAT…LSAP). A compositionally biased stretch (pro residues) spans 165-177 (LPEPVPEPVPEPP). The segment covering 293 to 305 (ISGMDDSSGTGSR) has biased composition (polar residues). The segment covering 314 to 328 (MEREREQEEADLLRE) has biased composition (basic and acidic residues). The region spanning 412 to 582 (TRPPVVTIMG…LTEAEMRELK (171 aa)) is the tr-type G domain. Residues 421 to 428 (GHVDHGKT) are G1. Residue 421–428 (GHVDHGKT) coordinates GTP. Residues 446–450 (GITQH) form a G2 region. Positions 468–471 (DTPG) are G3. GTP is bound by residues 468–472 (DTPGH) and 522–525 (NKMD). Positions 522-525 (NKMD) are G4. The interval 558-560 (SAK) is G5.

This sequence belongs to the TRAFAC class translation factor GTPase superfamily. Classic translation factor GTPase family. IF-2 subfamily.

Its subcellular location is the cytoplasm. Functionally, one of the essential components for the initiation of protein synthesis. Protects formylmethionyl-tRNA from spontaneous hydrolysis and promotes its binding to the 30S ribosomal subunits. Also involved in the hydrolysis of GTP during the formation of the 70S ribosomal complex. This is Translation initiation factor IF-2 from Chlorobium luteolum (strain DSM 273 / BCRC 81028 / 2530) (Pelodictyon luteolum).